Reading from the N-terminus, the 131-residue chain is 23S rRNA-specific endonuclease VapC20 (131 aa).

In terms of domain architecture, PINc spans 2 to 125 (IFVDTSFWAA…FDGDFSAAGF (124 aa)). Residues aspartate 5 and aspartate 98 each coordinate Mg(2+).

The protein belongs to the PINc/VapC protein family. The cofactor is Mg(2+).

Toxic component of a type II toxin-antitoxin (TA) system. An endoribonuclease that cleaves 23S rRNA in the sarcin-ricin loop (SRL). The SRL sequence is highly conserved and is implicated in GTP hydrolysis by EF-Tu and EF-G. Acts on purified ribosomes but not on isolated RNA. Its toxic effect is neutralized by coexpression with cognate antitoxin VapB20. This Mycobacterium tuberculosis (strain CDC 1551 / Oshkosh) protein is 23S rRNA-specific endonuclease VapC20 (vapC20).